A 273-amino-acid chain; its full sequence is Large ribosomal subunit protein uL2 (273 aa).

The interval 223–273 (VVMNPVDHPMGGGEGRSSGGRHPCTPWGVPTKGHKTRSNKSTDKYIVKRRG) is disordered. Residues 262 to 273 (KSTDKYIVKRRG) are compositionally biased toward basic and acidic residues.

It belongs to the universal ribosomal protein uL2 family. In terms of assembly, part of the 50S ribosomal subunit. Forms a bridge to the 30S subunit in the 70S ribosome.

One of the primary rRNA binding proteins. Required for association of the 30S and 50S subunits to form the 70S ribosome, for tRNA binding and peptide bond formation. It has been suggested to have peptidyltransferase activity; this is somewhat controversial. Makes several contacts with the 16S rRNA in the 70S ribosome. The chain is Large ribosomal subunit protein uL2 from Syntrophus aciditrophicus (strain SB).